The sequence spans 400 residues: Putative niacin/nicotinamide transporter NiaP (400 aa).

At Met1–Gly14 the chain is on the cytoplasmic side. The chain crosses the membrane as a helical span at residues Val15–Ala35. Residues Ala36–Lys49 are Extracellular-facing. The chain crosses the membrane as a helical span at residues Trp50 to Ala70. Residues Asp71–Lys77 are Cytoplasmic-facing. The next 2 membrane-spanning stretches (helical) occupy residues Val78 to Ser98 and Leu99 to Val119. The Cytoplasmic portion of the chain corresponds to Ala120–Ser142. The chain crosses the membrane as a helical span at residues Phe143 to Gly163. Over Trp164–Gln165 the chain is Extracellular. The chain crosses the membrane as a helical span at residues Ala166–Pro186. Topologically, residues Asp187 to Thr217 are cytoplasmic. The helical transmembrane segment at Val218–Leu238 threads the bilayer. Topologically, residues Pro239–Phe253 are extracellular. A helical membrane pass occupies residues Glu254–Ile274. Residues Glu275–Lys280 are Cytoplasmic-facing. A helical membrane pass occupies residues Trp281–Asp301. Over Ser302–Ser304 the chain is Extracellular. The chain crosses the membrane as a helical span at residues Leu305–Tyr325. Topologically, residues Ala326 to Thr343 are cytoplasmic. Residues Thr344–Ala364 form a helical membrane-spanning segment. The Extracellular portion of the chain corresponds to Arg365–Ser370. The chain crosses the membrane as a helical span at residues Val371–Gly391. Residues Lys392 to Glu400 lie on the Cytoplasmic side of the membrane.

Belongs to the major facilitator superfamily. Sugar transporter (TC 2.A.1.1) family.

The protein resides in the cell membrane. In terms of biological role, probably involved in the uptake of amidated and deamidated forms of niacin. Increases the growth rate of E.coli that is unable to make niacin de novo; confers increased sensitivity to the toxic niacin analog 6-amino-nicotinamide to wild-type E.coli. There is probably another mechanism for niacin uptake. This chain is Putative niacin/nicotinamide transporter NiaP, found in Bacillus subtilis (strain 168).